A 2025-amino-acid polypeptide reads, in one-letter code: E3 ubiquitin-protein ligase TTC3 (2025 aa).

The interaction with POLG stretch occupies residues Met1–Glu230. TPR repeat units lie at residues Gly231–Asn264 and Leu266–Trp298. Residue Ser378 is modified to Phosphoserine; by PKB/AKT2. Positions Asp423–Leu458 are disordered. 2 TPR repeats span residues Val536 to Glu572 and Cys576 to Leu609. The tract at residues Glu786 to Glu805 is disordered. Over residues Arg793 to Glu805 the composition is skewed to basic and acidic residues. At Ser1009 the chain carries Phosphoserine. 4 disordered regions span residues Ala1012–Ala1068, Lys1215–Ser1295, Asp1773–Lys1842, and Ile1894–Glu1944. Positions Val1019 to Lys1029 are enriched in basic residues. Residues Ser1038–Ser1052 are compositionally biased toward polar residues. A Phosphoserine modification is found at Ser1061. The segment covering Ile1894 to Tyr1912 has biased composition (basic and acidic residues). Polar residues predominate over residues Glu1913–Pro1928. Residues Cys1957–Gln1997 form an RING-type zinc finger. A disordered region spans residues Glu2004–Arg2025. Residues Pro2013–Arg2025 are compositionally biased toward polar residues.

As to quaternary structure, interacts (when phosphorylated on Ser-378) with AKT1, AKT2 and AKT3 (when phosphorylated). Interacts with CIT. Interacts with POLG. Interacts with HSP70. Interacts with SMURF2. Phosphorylation on Ser-378 by Akt is required for ubiquitin ligase activity. In terms of processing, proteolytically cleaved into differently sized N- and C-terminal fragments. Found in all tissues examined.

Its subcellular location is the nucleus. The protein resides in the cytoplasm. It localises to the golgi apparatus. It carries out the reaction S-ubiquitinyl-[E2 ubiquitin-conjugating enzyme]-L-cysteine + [acceptor protein]-L-lysine = [E2 ubiquitin-conjugating enzyme]-L-cysteine + N(6)-ubiquitinyl-[acceptor protein]-L-lysine.. The protein operates within protein modification; protein ubiquitination. E3 ubiquitin-protein ligase which catalyzes the formation of 'Lys-48'-polyubiquitin chains. Mediates the ubiquitination and subsequent degradation of phosphorylated Akt (AKT1, AKT2 and AKT3) in the nucleus. Acts as a terminal regulator of Akt signaling after activation; its phosphorylation by Akt, which is a prerequisite for ubiquitin ligase activity, suggests the existence of a regulation mechanism required to control Akt levels after activation. Positively regulates TGFB1-induced epithelial-mesenchymal transition and myofibroblast differentiation by mediating the ubiquitination and subsequent degradation of SMURF2. Regulates neuronal differentiation by regulating actin remodeling and Golgi organization via a signaling cascade involving RHOA, CIT and ROCK. Inhibits cell proliferation. This is E3 ubiquitin-protein ligase TTC3 (TTC3) from Homo sapiens (Human).